A 300-amino-acid chain; its full sequence is N-acetylmuramic acid 6-phosphate etherase (300 aa).

One can recognise an SIS domain in the interval 57–220 (IAVAFQCGGR…TTGAMIRTGK (164 aa)). The Proton donor role is filled by E85. E116 is a catalytic residue.

The protein belongs to the GCKR-like family. MurNAc-6-P etherase subfamily. As to quaternary structure, homodimer.

The catalysed reaction is N-acetyl-D-muramate 6-phosphate + H2O = N-acetyl-D-glucosamine 6-phosphate + (R)-lactate. It functions in the pathway amino-sugar metabolism; 1,6-anhydro-N-acetylmuramate degradation. The protein operates within amino-sugar metabolism; N-acetylmuramate degradation. It participates in cell wall biogenesis; peptidoglycan recycling. Its function is as follows. Specifically catalyzes the cleavage of the D-lactyl ether substituent of MurNAc 6-phosphate, producing GlcNAc 6-phosphate and D-lactate. Together with AnmK, is also required for the utilization of anhydro-N-acetylmuramic acid (anhMurNAc) either imported from the medium or derived from its own cell wall murein, and thus plays a role in cell wall recycling. This chain is N-acetylmuramic acid 6-phosphate etherase, found in Aliivibrio salmonicida (strain LFI1238) (Vibrio salmonicida (strain LFI1238)).